The following is a 581-amino-acid chain: Putative adenine deaminase BH0637 (581 aa).

This sequence belongs to the metallo-dependent hydrolases superfamily. Adenine deaminase family.

The catalysed reaction is adenine + H2O + H(+) = hypoxanthine + NH4(+). The chain is Putative adenine deaminase BH0637 from Halalkalibacterium halodurans (strain ATCC BAA-125 / DSM 18197 / FERM 7344 / JCM 9153 / C-125) (Bacillus halodurans).